A 128-amino-acid polypeptide reads, in one-letter code: Large ribosomal subunit protein bL20 (128 aa).

Belongs to the bacterial ribosomal protein bL20 family.

Functionally, binds directly to 23S ribosomal RNA and is necessary for the in vitro assembly process of the 50S ribosomal subunit. It is not involved in the protein synthesizing functions of that subunit. This Kocuria rhizophila (strain ATCC 9341 / DSM 348 / NBRC 103217 / DC2201) protein is Large ribosomal subunit protein bL20.